We begin with the raw amino-acid sequence, 262 residues long: Putative non-heme bromoperoxidase BpoC (262 aa).

Residues Arg-21, 87 to 88, and Arg-120 each bind substrate; that span reads SM. Residue Ser-87 is part of the active site. Catalysis depends on residues Asp-211 and His-239. Substrate is bound at residue His-239.

This sequence belongs to the AB hydrolase superfamily. Homodimer.

The sequence is that of Putative non-heme bromoperoxidase BpoC (bpoC) from Mycobacterium tuberculosis (strain CDC 1551 / Oshkosh).